The chain runs to 483 residues: MAYIESNSGKWEYVIGLEIHAQISSKSKLFSGSGTTFAASPNSQVSYVDAAMPGMLPVLNEYCVHQAIKTGLGLKAKVNKYSVFDRKNYFYADLPQGYQISQFYYPIVQDGTMEIPTSTGELKTIRINRLHLEQDAGKSMHDQSPHYSFIDLNRAGIGLMEIVTEPDISSPDEAAEFVKKLRSLLRYVGSCDGDMEKGSMRCDANVSVRRKGEPLGTRCEIKNINSIRNIVRAIEFEAKRQVDLIENGESVIQETRLFNADSGETRTMRSKEEAADYRYFPDPDLLPVILSDELINELKASLPELPDQKIDKYITKFGLSKYDAEVIVADESAAKYFEEAANECDPKLLANWLINELFGQLNKASAEISECKITPNDFAKLIKLIEDNTISGKIAKTVFEIMFETGKAADKIVEEQGLVQVSDSNVLNTVIDEVIRENPDSVEGYKGGKDKLFGFFVGQVMKKTGGKANPGLVNQLLKEKLGS.

Belongs to the GatB/GatE family. GatB subfamily. Heterotrimer of A, B and C subunits.

It carries out the reaction L-glutamyl-tRNA(Gln) + L-glutamine + ATP + H2O = L-glutaminyl-tRNA(Gln) + L-glutamate + ADP + phosphate + H(+). The catalysed reaction is L-aspartyl-tRNA(Asn) + L-glutamine + ATP + H2O = L-asparaginyl-tRNA(Asn) + L-glutamate + ADP + phosphate + 2 H(+). Allows the formation of correctly charged Asn-tRNA(Asn) or Gln-tRNA(Gln) through the transamidation of misacylated Asp-tRNA(Asn) or Glu-tRNA(Gln) in organisms which lack either or both of asparaginyl-tRNA or glutaminyl-tRNA synthetases. The reaction takes place in the presence of glutamine and ATP through an activated phospho-Asp-tRNA(Asn) or phospho-Glu-tRNA(Gln). In Rickettsia bellii (strain RML369-C), this protein is Aspartyl/glutamyl-tRNA(Asn/Gln) amidotransferase subunit B.